Here is a 449-residue protein sequence, read N- to C-terminus: Alpha-L-fucosidase (449 aa).

The N-terminal stretch at methionine 1 to alanine 19 is a signal peptide. 4 N-linked (GlcNAc...) asparagine glycosylation sites follow: asparagine 156, asparagine 224, asparagine 362, and asparagine 375.

Belongs to the glycosyl hydrolase 29 family. Homotetramer.

It localises to the secreted. It carries out the reaction an alpha-L-fucoside + H2O = L-fucose + an alcohol. Functionally, alpha-L-fucosidase is responsible for hydrolyzing the alpha-1,6-linked fucose joined to the reducing-end N-acetylglucosamine of the carbohydrate moieties of glycoproteins. This Branchiostoma floridae (Florida lancelet) protein is Alpha-L-fucosidase.